A 161-amino-acid chain; its full sequence is Cyclic pyranopterin monophosphate synthase (161 aa).

Substrate is bound by residues 75–77 (LCH) and 113–114 (ME). D128 is a catalytic residue.

The protein belongs to the MoaC family. In terms of assembly, homohexamer; trimer of dimers.

The catalysed reaction is (8S)-3',8-cyclo-7,8-dihydroguanosine 5'-triphosphate = cyclic pyranopterin phosphate + diphosphate. Its pathway is cofactor biosynthesis; molybdopterin biosynthesis. Functionally, catalyzes the conversion of (8S)-3',8-cyclo-7,8-dihydroguanosine 5'-triphosphate to cyclic pyranopterin monophosphate (cPMP). The polypeptide is Cyclic pyranopterin monophosphate synthase (Cronobacter sakazakii (strain ATCC BAA-894) (Enterobacter sakazakii)).